The chain runs to 447 residues: Cysteine--tRNA ligase (447 aa).

Residue Cys28 participates in Zn(2+) binding. The 'HIGH' region motif lies at 30–40 (PTVYNYIHIGN). Zn(2+) contacts are provided by Cys211, His236, and Glu240. Positions 268-272 (KMSKS) match the 'KMSKS' region motif. Lys271 provides a ligand contact to ATP.

The protein belongs to the class-I aminoacyl-tRNA synthetase family. Monomer. The cofactor is Zn(2+).

The protein resides in the cytoplasm. The enzyme catalyses tRNA(Cys) + L-cysteine + ATP = L-cysteinyl-tRNA(Cys) + AMP + diphosphate. This Streptococcus pyogenes serotype M1 protein is Cysteine--tRNA ligase.